A 99-amino-acid chain; its full sequence is Protein Tat (99 aa).

Positions 1 to 20 are disordered; the sequence is MEPVDPNIEPWNQPGSQPKT. An interaction with human CREBBP region spans residues 1–24; it reads MEPVDPNIEPWNQPGSQPKTACNQ. The interval 1-48 is transactivation; that stretch reads MEPVDPNIEPWNQPGSQPKTACNQCYCKKCCYHCQLCFLQKGLGICYG. Zn(2+)-binding residues include C22, C25, and C27. The segment at 22–37 is cysteine-rich; that stretch reads CNQCYCKKCCYHCQLC. K28 carries the N6-acetyllysine; by host PCAF modification. Residues C30, H33, C34, and C37 each coordinate Zn(2+). Positions 38-48 are core; that stretch reads FLQKGLGICYG. The short motif at 49-57 is the Nuclear localization signal, RNA-binding (TAR), and protein transduction element; that stretch reads REKRRQRTT. Residues 49-86 are interaction with the host capping enzyme RNGTT; that stretch reads REKRRQRTTTPYASKNHKDPIPKQPLPQARGDPTGPKE. K51 carries the N6-acetyllysine; by host EP300 and GCN5L2 modification. Asymmetric dimethylarginine; by host PRMT6 is present on residues R52 and R53. A disordered region spans residues 54 to 99; that stretch reads QRTTTPYASKNHKDPIPKQPLPQARGDPTGPKESKKEVESKTKTDP. Residue K71 forms a Glycyl lysine isopeptide (Lys-Gly) (interchain with G-Cter in ubiquitin) linkage. The Cell attachment site signature appears at 78 to 80; sequence RGD. Basic and acidic residues predominate over residues 83–99; sequence GPKESKKEVESKTKTDP.

It belongs to the lentiviruses Tat family. In terms of assembly, interacts with host CCNT1. Associates with the P-TEFb complex composed at least of Tat, P-TEFb (CDK9 and CCNT1), TAR RNA, RNA Pol II. Recruits the HATs CREBBP, TAF1/TFIID, EP300, PCAF and GCN5L2. Interacts with host KAT5/Tip60; this interaction targets the latter to degradation. Interacts with the host deacetylase SIRT1. Interacts with host capping enzyme RNGTT; this interaction stimulates RNGTT. Binds to host KDR, and to the host integrins ITGAV/ITGB3 and ITGA5/ITGB1. Interacts with host KPNB1/importin beta-1 without previous binding to KPNA1/importin alpha-1. Interacts with EIF2AK2. Interacts with host nucleosome assembly protein NAP1L1; this interaction may be required for the transport of Tat within the nucleus, since the two proteins interact at the nuclear rim. Interacts with host C1QBP/SF2P32; this interaction involves lysine-acetylated Tat. Interacts with the host chemokine receptors CCR2, CCR3 and CXCR4. Interacts with host DPP4/CD26; this interaction may trigger an anti-proliferative effect. Interacts with host LDLR. Interacts with the host extracellular matrix metalloproteinase MMP1. Interacts with host PRMT6; this interaction mediates Tat's methylation. Interacts with, and is ubiquitinated by MDM2/Hdm2. Interacts with host PSMC3 and HTATIP2. Interacts with STAB1; this interaction may overcome SATB1-mediated repression of IL2 and IL2RA (interleukin) in T cells by binding to the same domain than HDAC1. Interacts (when acetylated) with human CDK13, thereby increasing HIV-1 mRNA splicing and promoting the production of the doubly spliced HIV-1 protein Nef. Interacts with host TBP; this interaction modulates the activity of transcriptional pre-initiation complex. Interacts with host RELA. Interacts with host PLSCR1; this interaction negatively regulates Tat transactivation activity by altering its subcellular distribution. In terms of processing, asymmetrical arginine methylation by host PRMT6 seems to diminish the transactivation capacity of Tat and affects the interaction with host CCNT1. Acetylation by EP300, CREBBP, GCN5L2/GCN5 and PCAF regulates the transactivation activity of Tat. EP300-mediated acetylation of Lys-50 promotes dissociation of Tat from the TAR RNA through the competitive binding to PCAF's bromodomain. In addition, the non-acetylated Tat's N-terminus can also interact with PCAF. PCAF-mediated acetylation of Lys-28 enhances Tat's binding to CCNT1. Lys-50 is deacetylated by SIRT1. Post-translationally, polyubiquitination by host MDM2 does not target Tat to degradation, but activates its transactivation function and fosters interaction with CCNT1 and TAR RNA. In terms of processing, phosphorylated by EIF2AK2 on serine and threonine residues adjacent to the basic region important for TAR RNA binding and function. Phosphorylation of Tat by EIF2AK2 is dependent on the prior activation of EIF2AK2 by dsRNA.

The protein localises to the host nucleus. The protein resides in the host nucleolus. It is found in the host cytoplasm. Its subcellular location is the secreted. Functionally, transcriptional activator that increases RNA Pol II processivity, thereby increasing the level of full-length viral transcripts. Recognizes a hairpin structure at the 5'-LTR of the nascent viral mRNAs referred to as the transactivation responsive RNA element (TAR) and recruits the cyclin T1-CDK9 complex (P-TEFb complex) that will in turn hyperphosphorylate the RNA polymerase II to allow efficient elongation. The CDK9 component of P-TEFb and other Tat-activated kinases hyperphosphorylate the C-terminus of RNA Pol II that becomes stabilized and much more processive. Other factors such as HTATSF1/Tat-SF1, SUPT5H/SPT5, and HTATIP2 are also important for Tat's function. Besides its effect on RNA Pol II processivity, Tat induces chromatin remodeling of proviral genes by recruiting the histone acetyltransferases (HATs) CREBBP, EP300 and PCAF to the chromatin. This also contributes to the increase in proviral transcription rate, especially when the provirus integrates in transcriptionally silent region of the host genome. To ensure maximal activation of the LTR, Tat mediates nuclear translocation of NF-kappa-B by interacting with host RELA. Through its interaction with host TBP, Tat may also modulate transcription initiation. Tat can reactivate a latently infected cell by penetrating in it and transactivating its LTR promoter. In the cytoplasm, Tat is thought to act as a translational activator of HIV-1 mRNAs. Extracellular circulating Tat can be endocytosed by surrounding uninfected cells via the binding to several surface receptors such as CD26, CXCR4, heparan sulfate proteoglycans (HSPG) or LDLR. Neurons are rarely infected, but they internalize Tat via their LDLR. Through its interaction with nuclear HATs, Tat is potentially able to control the acetylation-dependent cellular gene expression. Modulates the expression of many cellular genes involved in cell survival, proliferation or in coding for cytokines or cytokine receptors. Tat plays a role in T-cell and neurons apoptosis. Tat induced neurotoxicity and apoptosis probably contribute to neuroAIDS. Circulating Tat also acts as a chemokine-like and/or growth factor-like molecule that binds to specific receptors on the surface of the cells, affecting many cellular pathways. In the vascular system, Tat binds to ITGAV/ITGB3 and ITGA5/ITGB1 integrins dimers at the surface of endothelial cells and competes with bFGF for heparin-binding sites, leading to an excess of soluble bFGF. The sequence is that of Protein Tat from Homo sapiens (Human).